We begin with the raw amino-acid sequence, 212 residues long: Leucyl/phenylalanyl-tRNA--protein transferase (212 aa).

This sequence belongs to the L/F-transferase family.

The protein localises to the cytoplasm. It catalyses the reaction N-terminal L-lysyl-[protein] + L-leucyl-tRNA(Leu) = N-terminal L-leucyl-L-lysyl-[protein] + tRNA(Leu) + H(+). It carries out the reaction N-terminal L-arginyl-[protein] + L-leucyl-tRNA(Leu) = N-terminal L-leucyl-L-arginyl-[protein] + tRNA(Leu) + H(+). The catalysed reaction is L-phenylalanyl-tRNA(Phe) + an N-terminal L-alpha-aminoacyl-[protein] = an N-terminal L-phenylalanyl-L-alpha-aminoacyl-[protein] + tRNA(Phe). In terms of biological role, functions in the N-end rule pathway of protein degradation where it conjugates Leu, Phe and, less efficiently, Met from aminoacyl-tRNAs to the N-termini of proteins containing an N-terminal arginine or lysine. In Paracoccus denitrificans (strain Pd 1222), this protein is Leucyl/phenylalanyl-tRNA--protein transferase.